The following is a 365-amino-acid chain: UDP-N-acetylglucosamine--N-acetylmuramyl-(pentapeptide) pyrophosphoryl-undecaprenol N-acetylglucosamine transferase (365 aa).

Residues 12–14 (TGG), N123, R166, S194, and Q295 contribute to the UDP-N-acetyl-alpha-D-glucosamine site.

It belongs to the glycosyltransferase 28 family. MurG subfamily.

It is found in the cell inner membrane. It carries out the reaction di-trans,octa-cis-undecaprenyl diphospho-N-acetyl-alpha-D-muramoyl-L-alanyl-D-glutamyl-meso-2,6-diaminopimeloyl-D-alanyl-D-alanine + UDP-N-acetyl-alpha-D-glucosamine = di-trans,octa-cis-undecaprenyl diphospho-[N-acetyl-alpha-D-glucosaminyl-(1-&gt;4)]-N-acetyl-alpha-D-muramoyl-L-alanyl-D-glutamyl-meso-2,6-diaminopimeloyl-D-alanyl-D-alanine + UDP + H(+). The protein operates within cell wall biogenesis; peptidoglycan biosynthesis. Cell wall formation. Catalyzes the transfer of a GlcNAc subunit on undecaprenyl-pyrophosphoryl-MurNAc-pentapeptide (lipid intermediate I) to form undecaprenyl-pyrophosphoryl-MurNAc-(pentapeptide)GlcNAc (lipid intermediate II). The polypeptide is UDP-N-acetylglucosamine--N-acetylmuramyl-(pentapeptide) pyrophosphoryl-undecaprenol N-acetylglucosamine transferase (Phenylobacterium zucineum (strain HLK1)).